A 507-amino-acid polypeptide reads, in one-letter code: Lysine--tRNA ligase (507 aa).

Glu416 and Glu423 together coordinate Mg(2+).

Belongs to the class-II aminoacyl-tRNA synthetase family. Homodimer. The cofactor is Mg(2+).

The protein resides in the cytoplasm. It catalyses the reaction tRNA(Lys) + L-lysine + ATP = L-lysyl-tRNA(Lys) + AMP + diphosphate. This is Lysine--tRNA ligase from Hahella chejuensis (strain KCTC 2396).